Here is a 793-residue protein sequence, read N- to C-terminus: Neurobeachin (793 aa).

Disordered regions lie at residues 68 to 92 and 685 to 793; these read ENIKKGKKGNVSTISGLSSQTTGAK and RETA…EILK. Polar residues-rich tracts occupy residues 77–90, 689–710, 750–762, and 782–793; these read NVSTISGLSSQTTG, RSGSQAGRNIRQEINSPTSTET, NILNGTDLETSTG, and ESLTESPSEILK.

Belongs to the WD repeat neurobeachin family. In terms of assembly, interacts with RII subunit of PKA. Forebrain and cerebellum.

It is found in the cytoplasm. Its subcellular location is the membrane. In terms of biological role, binds to type II regulatory subunits of protein kinase A and anchors/targets them to the membrane. May anchor the kinase to cytoskeletal and/or organelle-associated proteins. This is Neurobeachin (NBEA) from Gallus gallus (Chicken).